The following is a 79-amino-acid chain: RNA-binding protein Hfq (79 aa).

The region spanning 10–70 (DVFLNTVRKQ…ISTIMPGQPV (61 aa)) is the Sm domain.

This sequence belongs to the Hfq family. As to quaternary structure, homohexamer.

Its function is as follows. RNA chaperone that binds small regulatory RNA (sRNAs) and mRNAs to facilitate mRNA translational regulation in response to envelope stress, environmental stress and changes in metabolite concentrations. Also binds with high specificity to tRNAs. The sequence is that of RNA-binding protein Hfq from Bartonella henselae (strain ATCC 49882 / DSM 28221 / CCUG 30454 / Houston 1) (Rochalimaea henselae).